Consider the following 355-residue polypeptide: Anthranilate phosphoribosyltransferase (355 aa).

Residues G99, 102-103 (GD), T107, 109-112 (NIST), 127-135 (KHGNRSVSS), and S139 each bind 5-phospho-alpha-D-ribose 1-diphosphate. G99 provides a ligand contact to anthranilate. A Mg(2+)-binding site is contributed by S111. An anthranilate-binding site is contributed by N130. An anthranilate-binding site is contributed by R185. 2 residues coordinate Mg(2+): D243 and E244.

The protein belongs to the anthranilate phosphoribosyltransferase family. As to quaternary structure, homodimer. Mg(2+) serves as cofactor.

It carries out the reaction N-(5-phospho-beta-D-ribosyl)anthranilate + diphosphate = 5-phospho-alpha-D-ribose 1-diphosphate + anthranilate. The protein operates within amino-acid biosynthesis; L-tryptophan biosynthesis; L-tryptophan from chorismate: step 2/5. Functionally, catalyzes the transfer of the phosphoribosyl group of 5-phosphorylribose-1-pyrophosphate (PRPP) to anthranilate to yield N-(5'-phosphoribosyl)-anthranilate (PRA). This chain is Anthranilate phosphoribosyltransferase, found in Pseudoalteromonas translucida (strain TAC 125).